A 209-amino-acid polypeptide reads, in one-letter code: Large ribosomal subunit protein uL3 (209 aa).

The tract at residues Ala-132–Gly-153 is disordered. Gln-150 is subject to N5-methylglutamine.

Belongs to the universal ribosomal protein uL3 family. In terms of assembly, part of the 50S ribosomal subunit. Forms a cluster with proteins L14 and L19. In terms of processing, methylated by PrmB.

One of the primary rRNA binding proteins, it binds directly near the 3'-end of the 23S rRNA, where it nucleates assembly of the 50S subunit. The polypeptide is Large ribosomal subunit protein uL3 (Enterobacter sp. (strain 638)).